The primary structure comprises 142 residues: Large ribosomal subunit protein uL13 (142 aa).

This sequence belongs to the universal ribosomal protein uL13 family. As to quaternary structure, part of the 50S ribosomal subunit.

Functionally, this protein is one of the early assembly proteins of the 50S ribosomal subunit, although it is not seen to bind rRNA by itself. It is important during the early stages of 50S assembly. The protein is Large ribosomal subunit protein uL13 of Psychromonas ingrahamii (strain DSM 17664 / CCUG 51855 / 37).